Consider the following 301-residue polypeptide: Ribosomal RNA small subunit methyltransferase H (301 aa).

S-adenosyl-L-methionine is bound by residues 25-27, D45, F72, D94, and Q101; that span reads GGH.

Belongs to the methyltransferase superfamily. RsmH family.

The protein resides in the cytoplasm. It carries out the reaction cytidine(1402) in 16S rRNA + S-adenosyl-L-methionine = N(4)-methylcytidine(1402) in 16S rRNA + S-adenosyl-L-homocysteine + H(+). Specifically methylates the N4 position of cytidine in position 1402 (C1402) of 16S rRNA. The protein is Ribosomal RNA small subunit methyltransferase H of Methylococcus capsulatus (strain ATCC 33009 / NCIMB 11132 / Bath).